The following is a 223-amino-acid chain: Serine/threonine/tyrosine-interacting protein (223 aa).

The 149-residue stretch at 28–176 folds into the Tyrosine-protein phosphatase domain; that stretch reads EMQEVLPGLF…LQEYEAIYLA (149 aa). Positions 76–78 match the Interaction with FBXW7 motif; it reads FQQ. Serine 184 and serine 201 each carry phosphoserine. The interval 199 to 223 is disordered; that stretch reads TGSVKRTHEEDDDFGNMQVATAQNG.

Belongs to the protein-tyrosine phosphatase family. Non-receptor class subfamily. In terms of assembly, interacts with MAPK1; independently of MAPK1 phosphorylation status. Interacts with CARHSP1/Crhsp-24. Interacts (via FQQ motif) with FBXW7 (via F-box domain); the interaction is direct and prevents FBXW7 interaction with SKP1, a component of the SCF(FBXW7) complex. As to expression, widely expressed with highest levels in muscle, testis and brain. In testis, expression starts 13-14 days after birth and is limited to the seminiferous tubule and to round and elongating spermatids. Expression is low in condensing spermatids and pachytene spermatocytes, and absent in spermatogonia, spermatozoa and somatic Sertoli cells.

The protein resides in the nucleus. It localises to the cytoplasm. The protein localises to the cytosol. Functionally, catalytically inactive phosphatase. Acts as a nuclear anchor for MAPK1/MAPK3 (ERK1/ERK2). Modulates cell-fate decisions and cell migration by spatiotemporal regulation of MAPK1/MAPK3 (ERK1/ERK2). By binding to the F-box of FBXW7, prevents the assembly of FBXW7 into the SCF E3 ubiquitin-protein ligase complex, and thereby inhibits degradation of its substrates. Plays a role in spermatogenesis. The protein is Serine/threonine/tyrosine-interacting protein of Mus musculus (Mouse).